We begin with the raw amino-acid sequence, 1052 residues long: MDTFRKWLNKPKADDKSLLARFYHADRSLTAVASELDSFDGRAEPDRCTRLVSRLRQNQDKVLAITNLIMEELLGEERDPRAFRAKFPEEVLQENLAGQLWFGAECLAAGSSILNRESESKEMRPLAQAVTKSLSNVRVLLRDQCLRNNVPNSKTLHLDFNDSTTEQLYESLKIFDHLFAEFELSYVSAMVQVKSRHEYEMQQWIGVLFSETLQRALKIGLLDQDMVDAFDPGLMFSIPRLAIVAGLVIYAKGPLNMDMPGDELSEMFRPFRTILIKIRDLLRNLSKQELYQLEKLLCTNEEINTKVPLGYSSIEAPSPEPNSSNNHNNNNSNSSDSGSAKTSTTSPHKAVERLVDHRNNNNSSSCSASAATQAVARSPSMLSLSAGSTPTASPAPSPTPSHSIASTSSAATTSTNPPANWSEDDDDDDEEREDDEEECGMLDSDEQDLNDDSDSDVDEYIEAQLKAIVAAADCASGYLIPNTNLGNLLQPQTAPLTDNFVASEDDEFGAEQEQEQQQRQREEQLQPSSEQQEEPSTSAAMLAARRTLQRLRLPSSSSENEQTTGSNQQSTIKTPNGGGQPMRSGSQRQRHHSHHHHHRHHHHHHHHRQHHHQQQHQPAQAEQHSHHHHHQTHPHRTSRSARKRCSQEHWESTTAEQQQTIDHGHGLASADTSNASSFSDDVSLAMRNTTARLKFKSTENLLHRLFVCIAGVADQLQTNFASDLRQILRSVFLINMSSSQEDIDIPEKTKESELFEFRASENDVIQESAGSNQSIYSAEEVNPELDNVFNMGNGNGGGTNAARHSAGAAMQRNNTIDLSGGGYNNNNNNNNNSGSSSSSNSSTVARSHVARSRSLGDQEAATSGTLQEEQRQQQQQQQAQLQLQMQRQRNNSVGSNSPSSSSSSSSSSEHNSPISTRSGSRRRLHSNSASMPSIGSTATTAAATAAATATTTTSATTTTTTTTMSPPAWIPDGKAPRCMSCQTPFTAFRRRHHCRNCGGVFCGVCSNASAPLPKYGLTKAVRVCRECYVREVRSSRTQAHSQASRPQAASAS.

Disordered stretches follow at residues 311–348, 379–455, 506–539, 551–678, and 814–973; these read YSSIEAPSPEPNSSNNHNNNNSNSSDSGSAKTSTTSPH, PSML…DSDS, DEFGAEQEQEQQQRQREEQLQPSSEQQEEPSTSA, LRLP…ASSF, and NTID…IPDG. Composition is skewed to low complexity over residues 312 to 346, 379 to 392, and 400 to 419; these read SSIEAPSPEPNSSNNHNNNNSNSSDSGSAKTSTTS, PSMLSLSAGSTPTA, and PSHSIASTSSAATTSTNPPA. Residues 422–455 are compositionally biased toward acidic residues; the sequence is SEDDDDDDEEREDDEEECGMLDSDEQDLNDDSDS. Polar residues predominate over residues 554–574; sequence PSSSSENEQTTGSNQQSTIKT. 2 positions are modified to phosphoserine: serine 555 and serine 556. Basic residues-rich tracts occupy residues 588 to 614 and 625 to 644; these read RQRHHSHHHHHRHHHHHHHHRQHHHQQ and SHHHHHQTHPHRTSRSARKR. Polar residues predominate over residues 652–661; the sequence is STTAEQQQTI. The segment covering 824–842 has biased composition (low complexity); it reads NNNNNNNNNSGSSSSSNSS. Serine 854 carries the phosphoserine modification. A compositionally biased stretch (low complexity) spans 872 to 915; that stretch reads QQQQQQQAQLQLQMQRQRNNSVGSNSPSSSSSSSSSSEHNSPIS. Positions 926-935 are enriched in polar residues; it reads SNSASMPSIG. Positions 936-963 are enriched in low complexity; that stretch reads STATTAAATAAATATTTTSATTTTTTTT. The FYVE-type zinc finger occupies 972–1032; it reads DGKAPRCMSC…VCRECYVREV (61 aa). Residues cysteine 978, cysteine 981, cysteine 994, cysteine 997, cysteine 1002, cysteine 1005, cysteine 1024, and cysteine 1027 each coordinate Zn(2+).

It belongs to the lst-2 family.

Functionally, negative regulator of epidermal growth factor receptor (EGFR) signaling. The protein is Lateral signaling target protein 2 homolog of Drosophila virilis (Fruit fly).